Here is an 823-residue protein sequence, read N- to C-terminus: MKLFGFGSRRGQTAQGSIDHVYTGSGYRIRDSELQKIHRAAVKGDAAEVERCLARRSGDLDALDKQHRTALHLACASGHVQVVTLLVNRKCQIDVCDKENRTPLIQAVHCQEEACAVILLEHGANPNLKDIYGNTALHYAVYSESTSLAEKLLSHGAHIEALDKDNNTPLLFAIICKKEKMVEFLLKRKASSHAVDRLRRSALMLAVYYDSPGIVNILLKQNIDVFAQDMCGRDAEDYAISHHLTKIQQQILEHKKKILKKEKSDVGSSDESAVSIFHELRVDSLPASDDKDLNVATKQCVPEKVSEPLPGSSHEKGNRIVNGQGEGPPAKHPSLKPSTEVEDPAVKGAVQRKNVQTLRAEQALPVASEEEQERHERSEKKQPQVKEGNNTNKSEKIQLSENICDSTSSAAAGRLTQQRKIGKTYPQQFPKKLKEEHDRCTLKQENEEKTNVNMLYKKNREELERKEKQYKKEVEAKQLEPTVQSLEMKSKTARNTPNRDFHNHEEMKGLMDENCILKADIAILRQEICTMKNDNLEKENKYLKDIKIVKETNAALEKYIKLNEEMITETAFRYQQELNDLKAENTRLNAELLKEKESKKRLEADIESYQSRLAAAISKHSESVKTERNLKLALERTRDVSVQVEMSSAISKVKDENEFLTEQLSETQIKFNALKDKFRKTRDSLRKKSLALETVQNDLSQTQQQTQEMKEMYQNAEAKVNNSTGKWNCVEERICHLQRENAWLVQQLDDVHQKEDHKEIVTNIQRGFIESGKKDLVLEEKSKKLMNECDHLKESLFQYEREKTEGVVSIKEDKYFQTSRKKI.

ANK repeat units follow at residues 66 to 95, 99 to 128, 132 to 161, 165 to 194, and 198 to 227; these read QHRT…QIDV, ENRT…NPNL, YGNT…HIEA, DNNT…SSHA, and LRRS…DVFA. Disordered stretches follow at residues 301 to 343 and 355 to 402; these read VPEK…EVED and VQTL…LSEN. Positions 372-384 are enriched in basic and acidic residues; that stretch reads QERHERSEKKQPQ. Coiled coils occupy residues 431-480, 565-724, and 776-805; these read KKLK…KQLE, EMIT…NNST, and LVLE…EKTE.

This chain is Putative ankyrin repeat domain-containing protein 20A2, found in Homo sapiens (Human).